Reading from the N-terminus, the 458-residue chain is Neuronal acetylcholine receptor subunit beta-3 (458 aa).

The signal sequence occupies residues Met-1–Gly-21. Topologically, residues Phe-22–Thr-237 are extracellular. Residues Asn-51, Asn-138, and Asn-166 are each glycosylated (N-linked (GlcNAc...) asparagine). Cys-153 and Cys-167 are oxidised to a cystine. Helical transmembrane passes span Leu-238 to Pro-258, Leu-267 to Pro-287, and Leu-300 to Val-320. Over His-321–Arg-428 the chain is Cytoplasmic. The helical transmembrane segment at Ile-429 to Ala-449 threads the bilayer.

The protein belongs to the ligand-gated ion channel (TC 1.A.9) family. Acetylcholine receptor (TC 1.A.9.1) subfamily. Beta-3/CHRNB3 sub-subfamily. In terms of assembly, neuronal AChR seems to be composed of two different type of subunits: alpha and beta. CHRNB3/beta-3 subunit is only able to form functional nAChRs when co-assembled with another beta subunit. Participates in pentameric assemblies along with CHRNA4/alpha-4 and CHRNB2/beta-2 subunits and with CHRNA6/alpha-6 as well, forming stoichiometries such as (CHRNA3:CHRNB4)2:CHRNB3, (CHRNA4:CHRNB2)2:CHRNB3 or (CHRNA6:CHRNB2)2:CHRNB3.

The protein resides in the synaptic cell membrane. It localises to the cell membrane. It carries out the reaction Ca(2+)(in) = Ca(2+)(out). The enzyme catalyses K(+)(in) = K(+)(out). It catalyses the reaction Na(+)(in) = Na(+)(out). With respect to regulation, activated by a myriad of ligands such as acetylcholine, cytisine, nicotine, choline and epibatidine. Component of neuronal acetylcholine receptors (nAChRs) that function as pentameric, ligand-gated cation channels with high calcium permeability among other activities. nAChRs are excitatory neurotrasnmitter receptors formed by a collection of nAChR subunits known to mediate synaptic transmission in the nervous system and the neuromuscular junction. Each nAchR subunit confers differential attributes to channel properties, including activation, deactivation and desensitization kinetics, pH sensitivity, cation permeability, and binding to allosteric modulators. Has an accessory rather than functional role and is only able to form functional nAChRs when co-assembled with another beta subunit. Participates in pentameric assemblies along with CHRNA3, CHRNA4, CHRNA6, CHRNB2 and CHRNB4. Modulates receptor assembly and increases receptor sensitivity to nicotine when associated with CHRNB2, CHRNA4 and/or CHRNA6 as well as CHRNA3 and CHRNB4. Seems to play a role in nicotine addiction. This chain is Neuronal acetylcholine receptor subunit beta-3, found in Homo sapiens (Human).